Here is a 532-residue protein sequence, read N- to C-terminus: Sodium-dependent lysophosphatidylcholine symporter 1-A (532 aa).

Topologically, residues 1–40 (MARGEGAEQFSSGLLPTAKSVTQNEIKMVKLPKQQERKRA) are cytoplasmic. Residues 41–70 (LTVWSKVCFAIGGAPYQITGTALGFFLQIF) form a helical membrane-spanning segment. Topologically, residues 71–81 (LLDVAQLNPLN) are extracellular. A helical membrane pass occupies residues 82–102 (ASVILFVGRAWDAVTDPTVGF). At 103–114 (LVSRTPWTRHGR) the chain is on the cytoplasmic side. A helical membrane pass occupies residues 115 to 134 (MMPWILVSTIPAVLCYFLIW). Residues 135–144 (VVPPIEQGKM) lie on the Extracellular side of the membrane. The helical transmembrane segment at 145–169 (MWYLLFYCLFQTLQTCFHVPYSALT) threads the bilayer. Over 170 to 176 (MFISTEQ) the chain is Cytoplasmic. A helical transmembrane segment spans residues 177–208 (RERDSATAYRMTVEVFGTVVGTAIQGQIVGMA). Residues 209–232 (NTPCKNNTSPNNSSNDLIQSNNSH) are Extracellular-facing. C212 and C464 are joined by a disulfide. N-linked (GlcNAc...) asparagine glycosylation is found at N214, N220, and N229. A helical membrane pass occupies residues 233–266 (IPLKSNIFDERCAYMIASAVISLIYVVCAAVLFF). The Cytoplasmic segment spans residues 267 to 297 (GVREQDVQGELKAQKRVSFQKGLRLVMGHGP). The helical transmembrane segment at 298–324 (YVKLVLAFLFTSLAFMLLEGNFAVFIK) threads the bilayer. At 325–335 (YTLGFREDFQN) the chain is on the extracellular side. A helical membrane pass occupies residues 336 to 354 (ILLVIMVSATVSIPMWQWF). The Cytoplasmic segment spans residues 355 to 358 (LCRF). Residues 359-380 (GKKTAVYIGITWAVPFMILVVS) traverse the membrane as a helical segment. Topologically, residues 381–383 (VNS) are extracellular. The helical transmembrane segment at 384–420 (SLIVSYIVSIAAGVSVGAAFLLPWSMLPDVVDDFKLQ) threads the bilayer. Over 421–430 (NPTSQGHEAI) the chain is Cytoplasmic. The chain crosses the membrane as a helical span at residues 431-457 (FYSFYVFFTKFASGVSLGVSTLALSFA). Topologically, residues 458–469 (GYETGVCVQSDS) are extracellular. A helical transmembrane segment spans residues 470–493 (VNLTLKLLVSAAPVSLIALGLLIF). At 494–532 (MTYPIDEERREYNNKQLQLLLRNEEEEDEMEVLKPDITA) the chain is on the cytoplasmic side.

It belongs to the major facilitator superfamily. Expressed in the developing nervous system.

Its subcellular location is the cell membrane. It localises to the endoplasmic reticulum membrane. The catalysed reaction is a 1-acyl-sn-glycero-3-phosphocholine(in) + Na(+)(in) = a 1-acyl-sn-glycero-3-phosphocholine(out) + Na(+)(out). It catalyses the reaction 1-(4Z,7Z,10Z,13Z,16Z,19Z-docosahexaenoyl)-sn-glycero-3-phosphocholine(in) + Na(+)(in) = 1-(4Z,7Z,10Z,13Z,16Z,19Z-docosahexaenoyl)-sn-glycero-3-phosphocholine(out) + Na(+)(out). It carries out the reaction 1-(9Z-octadecenoyl)-sn-glycero-3-phosphocholine(in) + Na(+)(in) = 1-(9Z-octadecenoyl)-sn-glycero-3-phosphocholine(out) + Na(+)(out). The enzyme catalyses 1-hexadecanoyl-sn-glycero-3-phosphocholine(in) + Na(+)(in) = 1-hexadecanoyl-sn-glycero-3-phosphocholine(out) + Na(+)(out). The catalysed reaction is a 1-acyl-sn-glycero-3-phosphoethanolamine(in) + Na(+)(in) = a 1-acyl-sn-glycero-3-phosphoethanolamine(out) + Na(+)(out). Functionally, sodium-dependent lysophosphatidylcholine (LPC) symporter, which plays an essential role for blood-brain barrier formation and function. Specifically expressed in endothelium of the blood-brain barrier of micro-vessels and transports LPC into the brain. Transport of LPC is essential because it constitutes the major mechanism by which docosahexaenoic acid (DHA), an omega-3 fatty acid that is essential for normal brain growth and cognitive function, enters the brain. Transports LPC carrying long-chain fatty acids such LPC oleate and LPC palmitate with a minimum acyl chain length of 14 carbons. Does not transport docosahexaenoic acid in unesterified fatty acid. The sequence is that of Sodium-dependent lysophosphatidylcholine symporter 1-A (mfsd2aa) from Danio rerio (Zebrafish).